The sequence spans 222 residues: 2-C-methyl-D-erythritol 2,4-cyclodiphosphate synthase, chloroplastic (222 aa).

A chloroplast-targeting transit peptide spans 1–43 (MATASSLFLASPVATAPTARARSTPSASPARPSLRLRRPSTLA). Residues Asp-73 and His-75 each coordinate a divalent metal cation. Substrate-binding positions include 73–75 (DLH), 99–100 (HS), 103–111 (DVLLHCVVD), 121–123 (DIG), 126–130 (FPDSD), Asp-130, 165–171 (LQKPKIS), and 196–200 (AKTHE). Position 107 (His-107) interacts with a divalent metal cation.

Belongs to the IspF family. In terms of assembly, homotrimer. Requires a divalent metal cation as cofactor. Expressed in roots, leaves, stems, leaf sheaths and young panicles.

Its subcellular location is the plastid. The protein localises to the chloroplast. The catalysed reaction is 4-CDP-2-C-methyl-D-erythritol 2-phosphate = 2-C-methyl-D-erythritol 2,4-cyclic diphosphate + CMP. It functions in the pathway isoprenoid biosynthesis; isopentenyl diphosphate biosynthesis via DXP pathway; isopentenyl diphosphate from 1-deoxy-D-xylulose 5-phosphate: step 4/6. In terms of biological role, enzyme of the plastid non-mevalonate pathway for isoprenoid biosynthesis that converts 4-diphosphocytidyl-2C-methyl-D-erythritol 2-phosphate into 2C-methyl-D-erythritol 2,4-cyclodiphosphate and CMP. Is essential for chloroplast development. This chain is 2-C-methyl-D-erythritol 2,4-cyclodiphosphate synthase, chloroplastic, found in Oryza sativa subsp. japonica (Rice).